The chain runs to 251 residues: Flap endonuclease Xni (251 aa).

Asp-104 is a binding site for Mg(2+). Positions 160-249 (VLPRQLPDYW…IDGNLQQLRL (90 aa)) constitute a 5'-3' exonuclease domain. K(+) contacts are provided by Leu-171, Ala-172, Pro-180, Val-182, and Ile-185. The interval 184 to 189 (GIGPKS) is interaction with DNA.

It belongs to the Xni family. Mg(2+) is required as a cofactor. Requires K(+) as cofactor.

In terms of biological role, has flap endonuclease activity. During DNA replication, flap endonucleases cleave the 5'-overhanging flap structure that is generated by displacement synthesis when DNA polymerase encounters the 5'-end of a downstream Okazaki fragment. In Salmonella paratyphi A (strain ATCC 9150 / SARB42), this protein is Flap endonuclease Xni.